The primary structure comprises 106 residues: UPF0060 membrane protein Smed_0659 (106 aa).

The next 3 helical transmembrane spans lie at F4–W24, G31–V51, and A61–A81.

It belongs to the UPF0060 family.

The protein localises to the cell inner membrane. The sequence is that of UPF0060 membrane protein Smed_0659 from Sinorhizobium medicae (strain WSM419) (Ensifer medicae).